A 194-amino-acid chain; its full sequence is Outer membrane protein A (194 aa).

Positions 1–24 are cleaved as a signal peptide; it reads MNKPSKFALALAFAAVTASGVASA. A beta stranded transmembrane segment spans residues 30-38; that stretch reads WRNPYGNVW. Residues 77–193 form the OmpA-like domain; it reads MAAKVVFNAD…RVEIEIVGSR (117 aa).

This sequence belongs to the outer membrane OOP (TC 1.B.6) superfamily.

The protein localises to the cell outer membrane. Structural protein that may protect the integrity of the bacterium. This is Outer membrane protein A from Bordetella avium.